A 455-amino-acid chain; its full sequence is Alcohol acyl transferase 1 allele GSb (455 aa).

Catalysis depends on proton acceptor residues H164 and N385.

The protein belongs to the plant acyltransferase family. In terms of tissue distribution, expressed at very low levels in the skin of ripe fruit.

Involved in the biosynthesis of volatile esters which confer ripe apple fruit flavor. Alcohol acyl transferase that can use a wide range of alcohols as substrate to produce esters. The chain is Alcohol acyl transferase 1 allele GSb from Malus domestica (Apple).